The sequence spans 184 residues: Type-1 fimbrial protein, A chain (184 aa).

A signal peptide spans 1 to 23 (MKIKTLAIVVLSALSLSSTAALA). Residues C46 and C86 are joined by a disulfide bond.

It belongs to the fimbrial protein family.

The protein resides in the fimbrium. In terms of biological role, fimbriae (also called pili), polar filaments radiating from the surface of the bacterium to a length of 0.5-1.5 micrometers and numbering 100-300 per cell, enable bacteria to colonize the epithelium of specific host organs. This chain is Type-1 fimbrial protein, A chain, found in Escherichia coli.